Here is a 385-residue protein sequence, read N- to C-terminus: Galactokinase (385 aa).

Glu34 to Asp37 provides a ligand contact to substrate. Residue Ser124–Ser130 participates in ATP binding. Mg(2+) contacts are provided by Ser130 and Glu162. The Proton acceptor role is filled by Asp174. Tyr223 contacts substrate.

This sequence belongs to the GHMP kinase family. GalK subfamily.

It is found in the cytoplasm. The catalysed reaction is alpha-D-galactose + ATP = alpha-D-galactose 1-phosphate + ADP + H(+). It participates in carbohydrate metabolism; galactose metabolism. Catalyzes the transfer of the gamma-phosphate of ATP to D-galactose to form alpha-D-galactose-1-phosphate (Gal-1-P). The polypeptide is Galactokinase (Pasteurella multocida (strain Pm70)).